The chain runs to 398 residues: Neuroplastin (398 aa).

A signal peptide spans 1–28 (MSGSSLPSALALSLLLVSGSLLPGPGAA). 3 Ig-like domains span residues 29–134 (QNAG…PSIT), 148–235 (PRIV…IEVK), and 238–329 (PDIT…SVVT). The Extracellular segment spans residues 29-339 (QNAGFVKSPM…VLRVRSHLAP (311 aa)). Cysteines 52 and 116 form a disulfide. The narpin; mediates binding with FGFR1 and has antidepressant-like activity stretch occupies residues 149–161 (RIVTSEEVIIRDS). A disulfide bond links Cys170 and Cys218. 6 N-linked (GlcNAc...) asparagine glycosylation sites follow: Asn171, Asn197, Asn229, Asn284, Asn296, and Asn317. Cys259 and Cys316 are oxidised to a cystine. The helical transmembrane segment at 340 to 360 (LWPFLGILAEIIILVVIIVVY) threads the bilayer. At 361–398 (EKRKRPDEVPDDDEPAGPMKTNSTNNHKDKNLRQRNTN) the chain is on the cytoplasmic side. The segment at 365–398 (RPDEVPDDDEPAGPMKTNSTNNHKDKNLRQRNTN) is disordered.

In terms of assembly, interacts with ATP2B1; this interaction stabilizes ATP2B1 and increases ATPase activity; this interaction controls T cell calcium homeostasis following T cell activation. Interacts with XKR8; promoting its localization at the cell membrane. Isoform 1 is ubiquitously expressed. Isoform 2 is expressed in brain cortex and cerebellum (at protein level).

The protein localises to the cell membrane. It localises to the postsynaptic density. In terms of biological role, probable homophilic and heterophilic cell adhesion molecule involved in long term potentiation at hippocampal excitatory synapses through activation of p38MAPK. May also regulate neurite outgrowth by activating the FGFR1 signaling pathway. May play a role in synaptic plasticity. Also acts as a chaperone for ATP2B1; stabilizes ATP2B1 and increases its ATPase activity. Promotes localization of XKR8 at the cell membrane. This is Neuroplastin (NPTN) from Homo sapiens (Human).